The sequence spans 727 residues: Procollagen-lysine,2-oxoglutarate 5-dioxygenase 1 (727 aa).

Residues 1–18 form the signal peptide; the sequence is MRPLLLLAPLGWLLLAEA. N-linked (GlcNAc...) asparagine glycans are attached at residues N163, N197, and N538. The 92-residue stretch at 636–727 folds into the Fe2OG dioxygenase domain; that stretch reads QFDLAFVVRY…RYIAVSFVDP (92 aa). 2 residues coordinate Fe cation: H656 and D658. N-linked (GlcNAc...) asparagine glycosylation occurs at N686. H708 lines the Fe cation pocket. The active site involves R718.

Homodimer. Identified in a complex with P3H3 and P3H4. Requires Fe(2+) as cofactor. The cofactor is L-ascorbate.

Its subcellular location is the rough endoplasmic reticulum membrane. The enzyme catalyses L-lysyl-[collagen] + 2-oxoglutarate + O2 = (5R)-5-hydroxy-L-lysyl-[collagen] + succinate + CO2. In terms of biological role, part of a complex composed of PLOD1, P3H3 and P3H4 that catalyzes hydroxylation of lysine residues in collagen alpha chains and is required for normal assembly and cross-linkling of collagen fibrils. Forms hydroxylysine residues in -Xaa-Lys-Gly- sequences in collagens. These hydroxylysines serve as sites of attachment for carbohydrate units and are essential for the stability of the intermolecular collagen cross-links. In Pongo abelii (Sumatran orangutan), this protein is Procollagen-lysine,2-oxoglutarate 5-dioxygenase 1 (PLOD1).